Consider the following 932-residue polypeptide: 2-oxoglutarate dehydrogenase E1 component (932 aa).

Belongs to the alpha-ketoglutarate dehydrogenase family. As to quaternary structure, homodimer. Part of the 2-oxoglutarate dehydrogenase (OGDH) complex composed of E1 (2-oxoglutarate dehydrogenase), E2 (dihydrolipoamide succinyltransferase) and E3 (dihydrolipoamide dehydrogenase); the complex contains multiple copies of the three enzymatic components (E1, E2 and E3). Thiamine diphosphate is required as a cofactor.

The enzyme catalyses N(6)-[(R)-lipoyl]-L-lysyl-[protein] + 2-oxoglutarate + H(+) = N(6)-[(R)-S(8)-succinyldihydrolipoyl]-L-lysyl-[protein] + CO2. E1 component of the 2-oxoglutarate dehydrogenase (OGDH) complex which catalyzes the decarboxylation of 2-oxoglutarate, the first step in the conversion of 2-oxoglutarate to succinyl-CoA and CO(2). In Staphylococcus aureus (strain bovine RF122 / ET3-1), this protein is 2-oxoglutarate dehydrogenase E1 component.